The following is a 270-amino-acid chain: uncharacterized protein (270 aa).

The region spanning 1 to 50 (LTEVVKAQSFTKAAENLYTSQPSISRDIKRLENDYDVKVFEFKHSKMTLT) is the HTH lysR-type domain. A DNA-binding region (H-T-H motif) is located at residues 10 to 29 (FTKAAENLYTSQPSISRDIK).

Belongs to the LysR transcriptional regulatory family.

This is an uncharacterized protein from Staphylococcus xylosus.